We begin with the raw amino-acid sequence, 185 residues long: MSLEEVLKDIERDKEEKKKEIADAASRETAKIEKEREEKIQILQREYENRMREEGSRLYNSIIDKANVEARNIVRMRVQEILDQYGAKADELIKNLAKTKEYDDVLKKMIEVSRKALGPDCIVKVNTADKGRISDGNIKFEDIDPYGGVLATSRDGKIELDLRISSIRRDILERFKVRLYSMIED.

The protein belongs to the V-ATPase E subunit family. Has multiple subunits with at least A(3), B(3), C, D, E, F, H, I and proteolipid K(x).

The protein resides in the cell membrane. Component of the A-type ATP synthase that produces ATP from ADP in the presence of a proton gradient across the membrane. The polypeptide is A-type ATP synthase subunit E (Thermoplasma acidophilum (strain ATCC 25905 / DSM 1728 / JCM 9062 / NBRC 15155 / AMRC-C165)).